We begin with the raw amino-acid sequence, 164 residues long: LWamide neuropeptides (164 aa).

A propeptide spanning residues 1 to 6 (RSADAQ) is cleaved from the precursor. Positions 1-92 (RSADAQQHGL…WGRSADAQQP (92 aa)) are disordered. 2 positions are modified to tryptophan amide: W11 and W20. The propeptide occupies 23–27 (SADAQ). A tryptophan amide mark is found at W32 and W41. Residues 44–49 (SAEPGQ) constitute a propeptide that is removed on maturation. 2 positions are modified to tryptophan amide: W53 and W62. Positions 65–70 (SAEPLQ) are excised as a propeptide. Residues W74 and W83 each carry the tryptophan amide modification. Positions 86-90 (SADAQ) are excised as a propeptide. Tryptophan amide occurs at positions 95, 106, and 115. A propeptide spanning residues 118 to 123 (SADPGQ) is cleaved from the precursor. Tryptophan amide is present on residues W127 and W137. Residues 140–164 (SYEPPQFEDLEDLKKKSAIPKPSEQ) constitute a propeptide that is removed on maturation.

The protein belongs to the LWamide neuropeptide family.

The protein resides in the secreted. In terms of biological role, metamorphosin A may be part of an internal signaling system involved in control of metamorphosis. This is LWamide neuropeptides from Actinia equina (Beadlet anemone).